Here is a 292-residue protein sequence, read N- to C-terminus: tRNA (adenine(9)-N1)-methyltransferase (292 aa).

The 182-residue stretch at 72 to 253 (TFRKGGKKVS…ISLQSKSDKI (182 aa)) folds into the SAM-dependent MTase TRM10-type domain.

This sequence belongs to the class IV-like SAM-binding methyltransferase superfamily. TRM10 family.

It localises to the cytoplasm. The catalysed reaction is adenosine(9) in tRNA + S-adenosyl-L-methionine = N(1)-methyladenosine(9) in tRNA + S-adenosyl-L-homocysteine + H(+). Its function is as follows. Catalyzes the S-adenosyl-L-methionine-dependent formation of N(1)-methyladenine at position 9 (m1A9) in tRNA. This chain is tRNA (adenine(9)-N1)-methyltransferase, found in Sulfolobus acidocaldarius (strain ATCC 33909 / DSM 639 / JCM 8929 / NBRC 15157 / NCIMB 11770).